Consider the following 839-residue polypeptide: Autophagy-related protein 9A (839 aa).

The segment at 1–20 is disordered; the sequence is MAQFDTEYQRLEASYSDSPP. Alanine 2 carries the post-translational modification N-acetylalanine. The Cytoplasmic portion of the chain corresponds to 2 to 61; the sequence is AQFDTEYQRLEASYSDSPPGEEDLLVHVAEGSKSPWHHIENLDLFFSRVYNLHQKNGFTC. Positions 8–11 match the Tyrosine-based sorting signal motif; that stretch reads YQRL. A phosphoserine mark is found at serine 14, serine 16, and serine 18. Residues 62 to 84 traverse the membrane as a helical segment; it reads MLIGEIFELMQFLFVVAFTTFLV. The Lumenal segment spans residues 85 to 128; that stretch reads SCVDYDILFANKMVNHSLHPTEPVKVTLPDAFLPAQVCSARIQE. N-linked (GlcNAc...) asparagine glycosylation is present at asparagine 99. The chain crosses the membrane as a helical span at residues 129–154; the sequence is NGSLITILVIAGVFWIHRLIKFIYNI. The Cytoplasmic portion of the chain corresponds to 155–290; sequence CCYWEIHSFY…ELAQRLSNRI (136 aa). The stretch at 291 to 301 is an intramembrane region; sequence LWIGIANFLLC. Over 302 to 319 the chain is Cytoplasmic; that stretch reads PLILIWQILYAFFSYAEV. The stretch at 320–328 is an intramembrane region; sequence LKREPGALG. The Cytoplasmic portion of the chain corresponds to 329-371; it reads ARCWSLYGRCYLRHFNELEHELQSRLNRGYKPASKYMNCFLSP. The chain crosses the membrane as a helical span at residues 372–397; that stretch reads LLTLLAKNGAFFAGSILAVLIALTIY. The Lumenal portion of the chain corresponds to 398–406; sequence DEDVLAVEH. A helical membrane pass occupies residues 407 to 424; that stretch reads VLTTVTLLGVTVTVCRSF. Topologically, residues 425 to 470 are cytoplasmic; the sequence is IPDQHMVFCPEQLLRVILAHIHYMPDHWQGNAHRSQTRDEFAQLFQ. Residues 471–480 lie within the membrane without spanning it; sequence YKAVFILEEL. Over 481-483 the chain is Cytoplasmic; the sequence is LSP. Residues 484–492 lie within the membrane without spanning it; the sequence is IVTPLILIF. Residues 493–839 lie on the Cytoplasmic side of the membrane; it reads CLRPRALEII…DELPPQVHKV (347 aa). Residues serine 656, serine 735, serine 738, serine 741, and serine 828 each carry the phosphoserine modification. Disordered stretches follow at residues 656–686 and 719–839; these read SPLQ…SSGS and QQAQ…VHKV. Over residues 724-736 the composition is skewed to basic and acidic residues; that stretch reads EPERHLWHRRESD. Acidic residues-rich tracts occupy residues 737 to 747 and 823 to 832; these read ESGESAPDEGG and VPEEGSEDEL.

It belongs to the ATG9 family. Homotrimer; forms a homotrimer with a central pore that forms a path between the two membrane leaflets. Interacts (via cytoplasmic its C-terminus) with ATG2A. Interacts with SUPT20H. Interacts (via the tyrosine-based sorting signal motif) with AP4M1; promoting association with the AP-4 complex. Interacts with ARFIP1 and ARFIP2. Interacts with PI4K2A and PI4KB. Interacts with ATG4A; the interaction is direct and promotes ATG9A trafficking. In terms of processing, ufmylated in a DDRGK1 dependent manner.

It is found in the preautophagosomal structure membrane. The protein localises to the cytoplasmic vesicle. It localises to the autophagosome membrane. The protein resides in the golgi apparatus. Its subcellular location is the trans-Golgi network membrane. It is found in the late endosome membrane. The protein localises to the recycling endosome membrane. It localises to the endoplasmic reticulum membrane. The protein resides in the mitochondrion membrane. It catalyses the reaction a 1,2-diacyl-sn-glycero-3-phosphocholine(in) = a 1,2-diacyl-sn-glycero-3-phosphocholine(out). It carries out the reaction a 1,2-diacyl-sn-glycero-3-phospho-L-serine(in) = a 1,2-diacyl-sn-glycero-3-phospho-L-serine(out). The enzyme catalyses a 1,2-diacyl-sn-glycero-3-phosphoethanolamine(in) = a 1,2-diacyl-sn-glycero-3-phosphoethanolamine(out). Functionally, phospholipid scramblase involved in autophagy by mediating autophagosomal membrane expansion. Cycles between the preautophagosomal structure/phagophore assembly site (PAS) and the cytoplasmic vesicle pool and supplies membrane for the growing autophagosome. Lipid scramblase activity plays a key role in preautophagosomal structure/phagophore assembly by distributing the phospholipids that arrive through ATG2 (ATG2A or ATG2B) from the cytoplasmic to the luminal leaflet of the bilayer, thereby driving autophagosomal membrane expansion. Also required to supply phosphatidylinositol 4-phosphate to the autophagosome initiation site by recruiting the phosphatidylinositol 4-kinase beta (PI4KB) in a process dependent on ARFIP2, but not ARFIP1. In addition to autophagy, also plays a role in necrotic cell death. The protein is Autophagy-related protein 9A of Pongo abelii (Sumatran orangutan).